Consider the following 576-residue polypeptide: Arginine--tRNA ligase (576 aa).

Residues 122 to 132 carry the 'HIGH' region motif; the sequence is PNVAKEMHVGH.

The protein belongs to the class-I aminoacyl-tRNA synthetase family. In terms of assembly, monomer.

The protein resides in the cytoplasm. The enzyme catalyses tRNA(Arg) + L-arginine + ATP = L-arginyl-tRNA(Arg) + AMP + diphosphate. The chain is Arginine--tRNA ligase from Photobacterium profundum (strain SS9).